The following is a 491-amino-acid chain: GTPase Der (491 aa).

EngA-type G domains follow at residues 3 to 166 (PVVA…AEAM) and 200 to 373 (IKLA…DSAT). GTP contacts are provided by residues 9–16 (GRPNVGKS), 56–60 (DTGGI), 118–121 (NKVD), 206–213 (GKPNVGKS), 253–257 (DTAGV), and 318–321 (NKWD). A KH-like domain is found at 374–458 (RRVSTSMLTR…PIQIRFQEGD (85 aa)). The tract at residues 472–491 (QERRRKRALSHINDRKTKGE) is disordered.

This sequence belongs to the TRAFAC class TrmE-Era-EngA-EngB-Septin-like GTPase superfamily. EngA (Der) GTPase family. As to quaternary structure, associates with the 50S ribosomal subunit.

Functionally, GTPase that plays an essential role in the late steps of ribosome biogenesis. This chain is GTPase Der, found in Shewanella denitrificans (strain OS217 / ATCC BAA-1090 / DSM 15013).